Reading from the N-terminus, the 63-residue chain is uncharacterized protein (63 aa).

The chain crosses the membrane as a helical span at residues 3 to 23 (IIYIILGFLSLAIGIIGIFPS).

It is found in the membrane. This is an uncharacterized protein from Haemophilus influenzae (strain ATCC 51907 / DSM 11121 / KW20 / Rd).